A 649-amino-acid chain; its full sequence is Endoglucanase D (649 aa).

An N-terminal signal peptide occupies residues 1–41 (MSRMTLKSSMKKRVLSLLIAVVFLSLTGVFPSGLIETKVSA). The Nucleophile role is filled by Asp201. Active-site residues include His516 and Asp546. Glu555 (proton donor) is an active-site residue. Residues 579–649 (NEVLYGDVND…LIRVIEKLPI (71 aa)) form the Dockerin domain.

Belongs to the glycosyl hydrolase 9 (cellulase E) family. Ca(2+) serves as cofactor.

The catalysed reaction is Endohydrolysis of (1-&gt;4)-beta-D-glucosidic linkages in cellulose, lichenin and cereal beta-D-glucans.. Functionally, this enzyme catalyzes the endohydrolysis of 1,4-beta-glucosidic linkages in cellulose, lichenin and cereal beta-D-glucans. The sequence is that of Endoglucanase D (celD) from Acetivibrio thermocellus (strain ATCC 27405 / DSM 1237 / JCM 9322 / NBRC 103400 / NCIMB 10682 / NRRL B-4536 / VPI 7372) (Clostridium thermocellum).